The sequence spans 70 residues: Translational regulator CsrA (70 aa).

This sequence belongs to the CsrA/RsmA family. Homodimer; the beta-strands of each monomer intercalate to form a hydrophobic core, while the alpha-helices form wings that extend away from the core.

Its subcellular location is the cytoplasm. Its function is as follows. A translational regulator that binds mRNA to regulate translation initiation and/or mRNA stability. Usually binds in the 5'-UTR at or near the Shine-Dalgarno sequence preventing ribosome-binding, thus repressing translation. Its main target seems to be the major flagellin gene, while its function is anatagonized by FliW. The chain is Translational regulator CsrA from Clostridioides difficile (strain 630) (Peptoclostridium difficile).